The following is a 740-amino-acid chain: Alpha-1,6-mannosylglycoprotein 6-beta-N-acetylglucosaminyltransferase A (740 aa).

The Cytoplasmic segment spans residues 1–13 (MAFFSPWKLSSQK). A helical; Signal-anchor for type II membrane protein transmembrane segment spans residues 14–30 (LGFFLVTFGFIWGMMLL). Topologically, residues 31 to 740 (HFTIQQRTQP…GQVALCKDCL (710 aa)) are lumenal. N-linked (GlcNAc...) asparagine glycans are attached at residues Asn-109, Asn-114, and Asn-117. 9 cysteine pairs are disulfide-bonded: Cys-144-Cys-182, Cys-155-Cys-195, Cys-171-Cys-337, Cys-371-Cys-625, Cys-648-Cys-723, Cys-652-Cys-725, Cys-659-Cys-712, Cys-680-Cys-701, and Cys-736-Cys-739. The sufficient for catalytic activity stretch occupies residues 212-740 (NSLAEIRTDF…GQVALCKDCL (529 aa)). The N-linked (GlcNAc...) asparagine glycan is linked to Asn-333. Residue 377-378 (DS) coordinates substrate. N-linked (GlcNAc...) asparagine glycosylation is found at Asn-432 and Asn-446. Residue Glu-525 participates in UDP-N-acetyl-alpha-D-glucosamine binding. Residue Lys-553 participates in substrate binding.

It belongs to the glycosyltransferase 18 family. In terms of processing, N-glycosylated. Post-translationally, a secreted form is released from the membrane after cleavage by gamma-secretase. Detected in kidney (at protein level). Detected in kidney.

The protein resides in the golgi apparatus membrane. The protein localises to the secreted. The catalysed reaction is N(4)-{beta-D-GlcNAc-(1-&gt;2)-[beta-D-GlcNAc-(1-&gt;4)]-alpha-D-Man-(1-&gt;3)-[beta-D-GlcNAc-(1-&gt;2)-alpha-D-Man-(1-&gt;6)]-beta-D-Man-(1-&gt;4)-beta-D-GlcNAc-(1-&gt;4)-beta-D-GlcNAc}-L-asparaginyl-[protein] + UDP-N-acetyl-alpha-D-glucosamine = N(4)-{beta-D-GlcNAc-(1-&gt;2)-[beta-D-GlcNAc-(1-&gt;4)]-alpha-D-Man-(1-&gt;3)-[beta-D-GlcNAc-(1-&gt;2)-[beta-D-GlcNAc-(1-&gt;6)]-alpha-D-Man-(1-&gt;6)]-beta-D-Man-(1-&gt;4)-beta-D-GlcNAc-(1-&gt;4)-beta-D-GlcNAc}-L-asparaginyl-[protein] + UDP + H(+). It participates in protein modification; protein glycosylation. Its function is as follows. Catalyzes the addition of N-acetylglucosamine (GlcNAc) in beta 1-6 linkage to the alpha-linked mannose of biantennary N-linked oligosaccharides. Catalyzes an important step in the biosynthesis of branched, complex-type N-glycans, such as those found on EGFR, TGFR (TGF-beta receptor) and CDH2. Via its role in the biosynthesis of complex N-glycans, plays an important role in the activation of cellular signaling pathways, reorganization of the actin cytoskeleton, cell-cell adhesion and cell migration. MGAT5-dependent EGFR N-glycosylation enhances the interaction between EGFR and LGALS3 and thereby prevents rapid EGFR endocytosis and prolongs EGFR signaling. Required for efficient interaction between TGFB1 and its receptor. Enhances activation of intracellular signaling pathways by several types of growth factors, including FGF2, PDGF, IGF, TGFB1 and EGF. MGAT5-dependent CDH2 N-glycosylation inhibits CDH2-mediated homotypic cell-cell adhesion and contributes to the regulation of downstream signaling pathways. Promotes cell migration. Contributes to the regulation of the inflammatory response. MGAT5-dependent TCR N-glycosylation enhances the interaction between TCR and LGALS3, limits agonist-induced TCR clustering, and thereby dampens TCR-mediated responses to antigens. Required for normal leukocyte evasation and accumulation at sites of inflammation. Inhibits attachment of monocytes to the vascular endothelium and subsequent monocyte diapedesis. Promotes proliferation of umbilical vein endothelial cells and angiogenesis, at least in part by promoting the release of the growth factor FGF2 from the extracellular matrix. The chain is Alpha-1,6-mannosylglycoprotein 6-beta-N-acetylglucosaminyltransferase A (Mgat5) from Rattus norvegicus (Rat).